A 473-amino-acid chain; its full sequence is Sensor histidine kinase GtrS (473 aa).

The Cytoplasmic segment spans residues 1–8 (MPRSLLGR). Residues 9–29 (MLLLTLLAVLVAQGLSSLFWL) form a helical membrane-spanning segment. Over 30 to 197 (SHLRSSQREG…LEPEGLQPQQ (168 aa)) the chain is Periplasmic. A helical transmembrane segment spans residues 198-218 (VLSIVFTSLLLLLFTGLLMHW). The HAMP domain maps to 217-269 (HWQSRPLKRLARAARDLALGSPSAALEERGASELVEVARAFNTMHERIDRYLN). At 219 to 473 (QSRPLKRLAR…SLRLPRLGLE (255 aa)) the chain is on the cytoplasmic side. The region spanning 277–471 (AISHDLRTPI…RVSLRLPRLG (195 aa)) is the Histidine kinase domain. At His280 the chain carries Phosphohistidine; by autocatalysis.

Post-translationally, autophosphorylated.

The protein localises to the cell inner membrane. It carries out the reaction ATP + protein L-histidine = ADP + protein N-phospho-L-histidine.. Its function is as follows. Member of the two-component regulatory system GtrS/GltR involved in the regulation of glucose metabolism and transport, as well as regulation of the exotoxin A gene expression. GtrS recognizes and binds 2-ketogluconate and 6-phosphogluconate via its sensor domain, which accelerates GtrS autophosphorylation and concomitant transphosphorylation and regulation of the response regulator GltR. In terms of biological role, plays a key role during bacteria-host interactions and is required for optimal colonization and dissemination in a mouse model of infection. Contributes to modulation of the type III secretion system (T3SS) in response to host cells via the regulation of the OprB transport system. The polypeptide is Sensor histidine kinase GtrS (Pseudomonas aeruginosa (strain ATCC 15692 / DSM 22644 / CIP 104116 / JCM 14847 / LMG 12228 / 1C / PRS 101 / PAO1)).